The primary structure comprises 147 residues: Deoxyuridine 5'-triphosphate nucleotidohydrolase (147 aa).

R24 serves as a coordination point for Mg(2+). DUTP-binding positions include 68-70, 82-85, Y88, G93, I95, and R111; these read PRS and GVID.

The protein belongs to the dUTPase family. Requires Mg(2+) as cofactor.

The catalysed reaction is dUTP + H2O = dUMP + diphosphate + H(+). In terms of biological role, this enzyme is involved in nucleotide metabolism: it produces dUMP, the immediate precursor of thymidine nucleotides and it decreases the intracellular concentration of dUTP so that uracil cannot be incorporated into DNA. The sequence is that of Deoxyuridine 5'-triphosphate nucleotidohydrolase (OPG046) from Camelus.